A 345-amino-acid chain; its full sequence is MAREHQAAILPQPGGPLSVGMRPTPKPGPNDVLIEVKAVALNPCDYYQRDYGMPPVLIYPAVLGSDTAGVVVKLGSNVTTVPGPGSRVIAFASSFYQGGSPDHGAFQTYTLAQSEGVIPLPDSLSFEEGAVFPLAVLTALTAWTTIGMRLDTRYSPVDQQAVLIWGASSSVGSFAVQSAKTLGFTIYATASPEHHDLVKTLGADAVFDYKAGDVVSQIVSAVRRDGVQLHTAHCVVDGALQPTLDILKETKGDAPAKVAHSPVLPEGHPTLDNTQIIFNFPSLDEVARSKHMKEVFHGWLNLSLQTGEIVSSPNIQVENGGLSAVHAALDKLKNGVSGTKIVVAL.

The disordered stretch occupies residues 1–26 (MAREHQAAILPQPGGPLSVGMRPTPK). Residues 44-49 (CDYYQR), 168-171 (SSSV), 191-194 (SPEH), Y209, and 244-245 (LD) contribute to the NADP(+) site.

The protein belongs to the zinc-containing alcohol dehydrogenase family.

It participates in secondary metabolite biosynthesis; terpenoid biosynthesis. In terms of biological role, trans-enoyl reductase; part of the gene cluster that mediates the biosynthesis of talaronoid C, a fusicoccane diterpenoid with an unprecedented tricyclic 5/8/6 ring system. The first step in the pathway is performed by the fusicoccadiene synthase tndC that possesses both prenyl transferase and terpene cyclase activity, converting isopentenyl diphosphate and dimethylallyl diphosphate into geranylgeranyl diphosphate (GGDP) and further converting GGDP into talarodiene, a precursor for talaronoid C. The remaining enzymes from the cluster include the cytochrome P450 monooxygenase tndB, the aldehyde reductase tndE and the alcohol dehydrogenase tndF that are involved in the conversion of talarodiene into talaronoid C. This chain is Trans-enoyl reductase tndF, found in Aspergillus flavipes.